We begin with the raw amino-acid sequence, 475 residues long: Splicing factor U2AF 65 kDa subunit (475 aa).

Residues 1–90 form a disordered region; the sequence is MSDFDEFERQ…RHEKKKKVRK (90 aa). At S2 the chain carries N-acetylserine. S2 is subject to Phosphoserine. A required for interaction with PRPF19 region spans residues 2–93; the sequence is SDFDEFERQL…KKKKVRKYWD (92 aa). Positions 7 to 22 are enriched in basic and acidic residues; it reads FERQLNENKQERDKEN. K15 is modified (5-hydroxylysine; by JMJD6; alternate). A Glycyl lysine isopeptide (Lys-Gly) (interchain with G-Cter in SUMO2); alternate cross-link involves residue K15. The interval 17-47 is necessary and sufficient to stimulate pre-mRNAs 3'-end cleavage in a CFIm complex-dependent manner; the sequence is ERDKENRHRKRSHSRSRSRDRKRRSRSRDRR. Basic residues predominate over residues 23–46; the sequence is RHRKRSHSRSRSRDRKRRSRSRDR. The segment covering 47–56 has biased composition (basic and acidic residues); the sequence is RNRDQRSASR. Residue K70 forms a Glycyl lysine isopeptide (Lys-Gly) (interchain with G-Cter in SUMO2); alternate linkage. K70 carries the post-translational modification N6-acetyllysine; alternate. A Phosphoserine modification is found at S79. Over residues 79–89 the composition is skewed to basic residues; sequence SPRHEKKKKVR. 3 consecutive RRM domains span residues 149–231, 259–337, and 385–466; these read RRLY…RPHD, HKLF…RASV, and LPEE…YCDP. 5-hydroxylysine; by JMJD6 is present on K276. S294 is modified (phosphoserine).

It belongs to the splicing factor SR family. As to quaternary structure, interacts with U2AF1L4. Heterodimer with U2AF1. Binds unphosphorylated SF1. Interacts with SCAF11 and SNW1. Interacts with ZRSR2/U2AF1-RS2. Interacts with RBM17. Interacts with PRPF19; the interaction is direct. Interacts with POLR2A (via the C-terminal domain); Interacts with PRPF19; the interaction is direct. Interacts with POLR2A (via the C-terminal domain); recruits PRPF19 and the Prp19 complex to the pre-mRNA. Interacts with KHDC4 (Isoform 2). Interacts with ZRSR2. Interacts with the SF3B complex composed of SF3B1, SF3B2, SF3B3, SF3B4, SF3B5, SF3B6 and PHF5A. Interacts (via N-terminus) with CPSF7 (via C-terminus); this interaction stimulates pre-mRNA 3'-end processing by promoting the recruitment of the CFIm complex to cleavage and polyadenylation signals. Interacts with ARGLU1; interaction may be involved in ARGLU1-mediated modulation of alternative splicing. Lysyl-hydroxylation at Lys-15 and Lys-276 affects the mRNA splicing activity of the protein, leading to regulate some, but not all, alternative splicing events.

It localises to the nucleus. In terms of biological role, plays a role in pre-mRNA splicing and 3'-end processing. By recruiting PRPF19 and the PRP19C/Prp19 complex/NTC/Nineteen complex to the RNA polymerase II C-terminal domain (CTD), and thereby pre-mRNA, may couple transcription to splicing. Required for the export of mRNA out of the nucleus, even if the mRNA is encoded by an intron-less gene. Positively regulates pre-mRNA 3'-end processing by recruiting the CFIm complex to cleavage and polyadenylation signals. The chain is Splicing factor U2AF 65 kDa subunit (U2af2) from Mus musculus (Mouse).